The chain runs to 751 residues: MGNHLSDAMKILESGKLETEQGQEGRKMSWKEIPGPLQGDGQDVVSILQLVQNLMHGDDEEQGHRMQFVGEQGHMALLGHSLAAYISVLERERLRKLTTRILSDTTLWLCRLFRYENGSAYFHEDDREGLLKVCRLVMNTHYEDFTTEGFTALSSKHPVIYQSAACRPGLGQHLCSQLGLPLSCLCVVPCNTMFGSLHQMDVALLDKLVKDDRDSGKLPLLLIANAGTPGAGHTDKLSRLKELCVQYNMWLHVEGVNLATLVLGQVSSTVTAATKCDSMTLTPGPWLGLPAVPAVTLYRHEDPALSLAAGLTSSQPVEKLRALPLWLSLQYLGHDGIVERIKHASQLSQQLLEHLKTLASIKTSVEDELNSPVVVFRFSHENSAPSSGGSVEGSYAGERDILDAFNRWLGDQLAEQVPLSGVDVVELEDEGTCVRFSPLMTAAALGTQENDVAALVEKLAEMIPLLCCTLRLRQDFRDEVLQQASLSYIEDLNWPGLGVVRFEPRTTDLDEDKRQDRVEKINSDLLKKLMELDTDLNFSGGPEFSEEKNCIFIGIATEDLDVAELVETIMSLGRDIEESGKLFENMTEVVRKGIQEAELQLQKANEEKLMEEGVLRQIPLVSSVLNWFSPVQASVKGRTFNLAEGCLDSTEPVYSIKAQMRKEDSPDSPKANTRRFPGQKLFRRPGAGSDSISETSSVSQLEESFRETLHSQAADEAEVPQERPAHILEETAIADQRVPEGQEAESVETIR.

A disordered region spans residues 659-751 (QMRKEDSPDS…QEAESVETIR (93 aa)). Residues 690–702 (DSISETSSVSQLE) are compositionally biased toward polar residues. Residues 720–729 (PQERPAHILE) are compositionally biased toward basic and acidic residues. The span at 742-751 (QEAESVETIR) shows a compositional bias: acidic residues.

This sequence belongs to the group II decarboxylase family. Pyridoxal 5'-phosphate is required as a cofactor.

This Danio rerio (Zebrafish) protein is Pyridoxal-dependent decarboxylase domain-containing protein 1 (pdxdc1).